A 531-amino-acid chain; its full sequence is 2-isopropylmalate synthase (531 aa).

The Pyruvate carboxyltransferase domain maps to isoleucine 8–tyrosine 284. Mn(2+) is bound by residues aspartate 17, histidine 208, histidine 210, and asparagine 244. The segment at arginine 408–alanine 531 is regulatory domain.

This sequence belongs to the alpha-IPM synthase/homocitrate synthase family. LeuA type 1 subfamily. In terms of assembly, homodimer. It depends on Mn(2+) as a cofactor.

It is found in the cytoplasm. It catalyses the reaction 3-methyl-2-oxobutanoate + acetyl-CoA + H2O = (2S)-2-isopropylmalate + CoA + H(+). It functions in the pathway amino-acid biosynthesis; L-leucine biosynthesis; L-leucine from 3-methyl-2-oxobutanoate: step 1/4. Its function is as follows. Catalyzes the condensation of the acetyl group of acetyl-CoA with 3-methyl-2-oxobutanoate (2-ketoisovalerate) to form 3-carboxy-3-hydroxy-4-methylpentanoate (2-isopropylmalate). This Nostoc sp. (strain PCC 7120 / SAG 25.82 / UTEX 2576) protein is 2-isopropylmalate synthase.